The chain runs to 452 residues: MKVISNFQNKKILILGLAKSGEAAAKLLTKLGALVTVNDSKPFDQNPAAQALLEEGIKVICGSHPVELLDEDFEYMVKNPGIPYDNPMVKRALAKEIPILTEVELAYFVSEAPIIGITGSNGKTTTTTMIADVLNAGGQSALLSGNIGYPASKVVQKAIAGDTLVMELSSFQLVGVNAFRPHIAVITNLMPTHLDYHGSFEDYVAAKWMIQAQMTESDYLILNANQEISATLAKTTQATVIPFSTQKVVDGAYLKDGILYFKEQAIIAATDLGVPGSHNIENALATIAVAKLSGIADDIIAQCLSHFGGVKHRLQRVGQIKDITFYNDSKSTNILATQKALSGFDNSRLILIAGGLDRGNEFDDLVPDLLGLKQMIILGESAERMKRAANKAEVSYLEARNVAEATELAFKLAQTGDTILLSPANASWDMYPNFEVRGDEFLATFDCLRGDA.

119–125 (GSNGKTT) is an ATP binding site.

The protein belongs to the MurCDEF family.

The protein resides in the cytoplasm. The enzyme catalyses UDP-N-acetyl-alpha-D-muramoyl-L-alanine + D-glutamate + ATP = UDP-N-acetyl-alpha-D-muramoyl-L-alanyl-D-glutamate + ADP + phosphate + H(+). It participates in cell wall biogenesis; peptidoglycan biosynthesis. Functionally, cell wall formation. Catalyzes the addition of glutamate to the nucleotide precursor UDP-N-acetylmuramoyl-L-alanine (UMA). The sequence is that of UDP-N-acetylmuramoylalanine--D-glutamate ligase from Streptococcus pyogenes serotype M2 (strain MGAS10270).